The primary structure comprises 228 residues: 3,4-dihydroxy-2-butanone 4-phosphate synthase (228 aa).

Residues 37 to 38, aspartate 42, 150 to 154, and glutamate 174 each bind D-ribulose 5-phosphate; these read RE and RPGHT. Glutamate 38 is a Mg(2+) binding site. Residue histidine 153 coordinates Mg(2+).

Belongs to the DHBP synthase family. Homodimer. Requires Mg(2+) as cofactor. Mn(2+) serves as cofactor.

It catalyses the reaction D-ribulose 5-phosphate = (2S)-2-hydroxy-3-oxobutyl phosphate + formate + H(+). Its pathway is cofactor biosynthesis; riboflavin biosynthesis; 2-hydroxy-3-oxobutyl phosphate from D-ribulose 5-phosphate: step 1/1. In terms of biological role, catalyzes the conversion of D-ribulose 5-phosphate to formate and 3,4-dihydroxy-2-butanone 4-phosphate. In Chloroherpeton thalassium (strain ATCC 35110 / GB-78), this protein is 3,4-dihydroxy-2-butanone 4-phosphate synthase.